A 255-amino-acid chain; its full sequence is 1-(5-phosphoribosyl)-5-[(5-phosphoribosylamino)methylideneamino] imidazole-4-carboxamide isomerase (255 aa).

Residue aspartate 12 is the Proton acceptor of the active site. Catalysis depends on aspartate 131, which acts as the Proton donor.

The protein belongs to the HisA/HisF family.

Its subcellular location is the cytoplasm. It catalyses the reaction 1-(5-phospho-beta-D-ribosyl)-5-[(5-phospho-beta-D-ribosylamino)methylideneamino]imidazole-4-carboxamide = 5-[(5-phospho-1-deoxy-D-ribulos-1-ylimino)methylamino]-1-(5-phospho-beta-D-ribosyl)imidazole-4-carboxamide. The protein operates within amino-acid biosynthesis; L-histidine biosynthesis; L-histidine from 5-phospho-alpha-D-ribose 1-diphosphate: step 4/9. The polypeptide is 1-(5-phosphoribosyl)-5-[(5-phosphoribosylamino)methylideneamino] imidazole-4-carboxamide isomerase (Cutibacterium acnes (strain DSM 16379 / KPA171202) (Propionibacterium acnes)).